Reading from the N-terminus, the 258-residue chain is 4-hydroxy-2-oxovalerate aldolase (258 aa).

Residue H48 is the Proton acceptor of the active site. Q149 contributes to the substrate binding site. E151 contacts Mg(2+). Substrate contacts are provided by A176 and D177. Residue D177 participates in Mg(2+) binding.

The protein belongs to the HpcH/HpaI aldolase family.

The catalysed reaction is (S)-4-hydroxy-2-oxopentanoate = acetaldehyde + pyruvate. It functions in the pathway xenobiotic degradation; biphenyl degradation. Functionally, catalyzes the reversible retro-aldol cleavage of 4-hydroxy-2-oxovalerate to pyruvate and acetaldehyde. The chain is 4-hydroxy-2-oxovalerate aldolase (bphF) from Rhodococcus jostii (strain RHA1).